Consider the following 296-residue polypeptide: GTPase Era (296 aa).

An Era-type G domain is found at 3-170; sequence KSGFVTIVGR…KELMFKYIPE (168 aa). The tract at residues 11-18 is G1; it reads GRPNVGKS. 11 to 18 provides a ligand contact to GTP; that stretch reads GRPNVGKS. The interval 37–41 is G2; that stretch reads QTTRN. The G3 stretch occupies residues 58 to 61; it reads DTPG. GTP is bound by residues 58–62 and 120–123; these read DTPGI and NKID. The segment at 120 to 123 is G4; sequence NKID. Residues 149 to 151 are G5; that stretch reads ISA. In terms of domain architecture, KH type-2 spans 201 to 278; sequence LSEEVPHGIA…YIRLWVKVKE (78 aa).

Belongs to the TRAFAC class TrmE-Era-EngA-EngB-Septin-like GTPase superfamily. Era GTPase family. Monomer.

The protein localises to the cytoplasm. It localises to the cell membrane. In terms of biological role, an essential GTPase that binds both GDP and GTP, with rapid nucleotide exchange. Plays a role in 16S rRNA processing and 30S ribosomal subunit biogenesis and possibly also in cell cycle regulation and energy metabolism. The polypeptide is GTPase Era (Clostridium botulinum (strain ATCC 19397 / Type A)).